The chain runs to 338 residues: Replication factor C subunit 3 (338 aa).

Position 57–64 (57–64 (GPPGTGKT)) interacts with ATP.

Belongs to the activator 1 small subunits family. Heteropentamer of subunits RFC1, RFC2, RFC3, RFC4 and RFC5 that forms a complex with PCNA in the presence of ATP.

The protein localises to the nucleus. In terms of biological role, the elongation of primed DNA templates by DNA polymerase delta and epsilon requires the action of the accessory proteins proliferating cell nuclear antigen (PCNA) and activator 1. Subunit 3 binds ATP. This chain is Replication factor C subunit 3 (RFC3), found in Blastobotrys adeninivorans (Yeast).